Here is an 84-residue protein sequence, read N- to C-terminus: Cell division topological specificity factor (84 aa).

It belongs to the MinE family.

Functionally, prevents the cell division inhibition by proteins MinC and MinD at internal division sites while permitting inhibition at polar sites. This ensures cell division at the proper site by restricting the formation of a division septum at the midpoint of the long axis of the cell. This chain is Cell division topological specificity factor, found in Chromohalobacter salexigens (strain ATCC BAA-138 / DSM 3043 / CIP 106854 / NCIMB 13768 / 1H11).